Here is a 145-residue protein sequence, read N- to C-terminus: D-aminoacyl-tRNA deacylase (145 aa).

Positions 137–138 match the Gly-cisPro motif, important for rejection of L-amino acids motif; sequence GP.

The protein belongs to the DTD family. As to quaternary structure, homodimer.

The protein resides in the cytoplasm. The enzyme catalyses glycyl-tRNA(Ala) + H2O = tRNA(Ala) + glycine + H(+). It carries out the reaction a D-aminoacyl-tRNA + H2O = a tRNA + a D-alpha-amino acid + H(+). Functionally, an aminoacyl-tRNA editing enzyme that deacylates mischarged D-aminoacyl-tRNAs. Also deacylates mischarged glycyl-tRNA(Ala), protecting cells against glycine mischarging by AlaRS. Acts via tRNA-based rather than protein-based catalysis; rejects L-amino acids rather than detecting D-amino acids in the active site. By recycling D-aminoacyl-tRNA to D-amino acids and free tRNA molecules, this enzyme counteracts the toxicity associated with the formation of D-aminoacyl-tRNA entities in vivo and helps enforce protein L-homochirality. The chain is D-aminoacyl-tRNA deacylase from Ruegeria pomeroyi (strain ATCC 700808 / DSM 15171 / DSS-3) (Silicibacter pomeroyi).